A 403-amino-acid polypeptide reads, in one-letter code: Mitochondrial intermembrane space import and assembly protein 40 (403 aa).

A mitochondrion-targeting transit peptide spans 1-31; sequence MLRNLVVRNACRNRPSIQVARGLCRHQTRRL. Topologically, residues 33-46 are mitochondrial matrix; sequence ASSPQFGRNSNQEK. A helical; Signal-anchor for type II membrane protein membrane pass occupies residues 47 to 66; the sequence is TAGFIMGILSMAGALYFIAP. Residues 67-403 lie on the Mitochondrial intermembrane side of the membrane; sequence NRKPLFASRK…KEPLNEESKP (337 aa). Composition is skewed to basic and acidic residues over residues 75 to 84, 101 to 118, 147 to 168, 206 to 230, and 262 to 271; these read RKVESDKTAE, NNSK…KNDE, EDNK…KDDE, SEKK…KTTT, and EELRKQEEKQ. A disordered region spans residues 75-292; that stretch reads RKVESDKTAE…GAYNPDTGEI (218 aa). 3 disulfides stabilise this stretch: Cys-296–Cys-298, Cys-307–Cys-340, and Cys-317–Cys-330. The CHCH domain maps to 304-348; sequence HGPCGEEFKSAFSCFVYSEAEPKGIDCVEKFQHMQDCFRKYPEHY. Short sequence motifs (cx9C motif) lie at residues 307–317 and 330–340; these read CGEEFKSAFSC and CVEKFQHMQDC. Residues 351–403 form a disordered region; that stretch reads QLKETSDDEEPQDKVKVNTIESAPNVSSAKENAAKKAEQSDVKKEPLNEESKP. A compositionally biased stretch (polar residues) spans 369–378; it reads TIESAPNVSS. Positions 382–403 are enriched in basic and acidic residues; the sequence is NAAKKAEQSDVKKEPLNEESKP.

Monomer. Interacts with the FAD-linked sulfhydryl oxidase ERV1 and with the substrate proteins COX17, TIM9, and TIM13, forming transient intermolecular disulfide bridges. Interacts with FCJ1. Cu(2+) is required as a cofactor. Zn(2+) serves as cofactor.

Its subcellular location is the mitochondrion inner membrane. In terms of biological role, required for the import and folding of small cysteine-containing proteins (small Tim) in the mitochondrial intermembrane space (IMS). Forms a redox cycle with ERV1 that involves a disulfide relay system. Precursor proteins to be imported into the IMS are translocated in their reduced form into the mitochondria. The oxidized form of MIA40 forms a transient intermolecular disulfide bridge with the reduced precursor protein, resulting in oxidation of the precursor protein that now contains an intramolecular disulfide bond and is able to undergo folding in the IMS. Reduced MIA40 is reoxidized by FAD-linked sulfhydryl oxidase ERV1. This is Mitochondrial intermembrane space import and assembly protein 40 (MIA40) from Saccharomyces cerevisiae (strain ATCC 204508 / S288c) (Baker's yeast).